We begin with the raw amino-acid sequence, 429 residues long: Probable M18 family aminopeptidase 2 (429 aa).

Zn(2+) contacts are provided by H82, H156, and H401.

The protein belongs to the peptidase M18 family. It depends on Zn(2+) as a cofactor.

This Pseudomonas putida (strain ATCC 47054 / DSM 6125 / CFBP 8728 / NCIMB 11950 / KT2440) protein is Probable M18 family aminopeptidase 2.